The chain runs to 324 residues: NADH-quinone oxidoreductase subunit H (324 aa).

Transmembrane regions (helical) follow at residues 11–31 (ILIT…CGAF), 81–101 (VIFT…FAIV), 114–134 (IGIL…LFAG), 154–174 (VSYE…AGSF), 186–206 (LWNV…GVAV), 237–257 (FFVG…TLFF), 265–285 (LPPF…FILI), and 304–324 (VCLP…LYNA).

Belongs to the complex I subunit 1 family. NDH-1 is composed of 13 different subunits. Subunits NuoA, H, J, K, L, M, N constitute the membrane sector of the complex.

The protein resides in the cell inner membrane. The enzyme catalyses a quinone + NADH + 5 H(+)(in) = a quinol + NAD(+) + 4 H(+)(out). NDH-1 shuttles electrons from NADH, via FMN and iron-sulfur (Fe-S) centers, to quinones in the respiratory chain. The immediate electron acceptor for the enzyme in this species is believed to be ubiquinone. Couples the redox reaction to proton translocation (for every two electrons transferred, four hydrogen ions are translocated across the cytoplasmic membrane), and thus conserves the redox energy in a proton gradient. This subunit may bind ubiquinone. The protein is NADH-quinone oxidoreductase subunit H of Pectobacterium atrosepticum (strain SCRI 1043 / ATCC BAA-672) (Erwinia carotovora subsp. atroseptica).